A 467-amino-acid polypeptide reads, in one-letter code: MTKRERIIQSVLVKVPKDAINQFLSHGSTPISVLFLAALVGVLAGLVGTYFEIAVHFVSETRTEWLKSEIGHLLPLWLAAILISAALAFVGYFLVHRFAPEAAGSGIPEIEGAMDNIRPVRWWRVIPVKFFGGMGALGSGMVLGREGPTVQMGGAVGRMVTDIFRVKDDDTRHSLLASGAAGGLAAAFNAPLAGIMFVVEEMRPQFRYSLISIRAVIISAVMANIVFRAINGQDAVITMPQYQPPELKALWLFLLLGGLFGVFGVLFNKLVTVAQDAFVALHKNDRKRYLITGTCLGGIFGLLLLYVPELTGGGIHLIPDVTNGNYSVSLLVMLFVGRVLTTLICFGSGAPGGIFAPMLALGTLFGYAFGATAKILLPDLPIEPGMFAIAGMGALFAATVRAPITGILLVIEMTNNYYLILPLIITSLGAVICAQICGGKPIYSQLLHRTIKNDKLRQQDLPEQQNS.

The Cytoplasmic segment spans residues 1 to 30; that stretch reads MTKRERIIQSVLVKVPKDAINQFLSHGSTP. The chain crosses the membrane as a helical span at residues 31–67; it reads ISVLFLAALVGVLAGLVGTYFEIAVHFVSETRTEWLK. Over 68-74 the chain is Periplasmic; that stretch reads SEIGHLL. The chain crosses the membrane as a helical span at residues 75–98; the sequence is PLWLAAILISAALAFVGYFLVHRF. The Selectivity filter part_1 signature appears at 104-108; sequence GSGIP. A chloride-binding site is contributed by serine 105. Residues 107–114 constitute an intramembrane region (helical); it reads IPEIEGAM. The Cytoplasmic segment spans residues 115–121; sequence DNIRPVR. Helical transmembrane passes span 122–139 and 146–164; these read WWRV…ALGS and EGPT…TDIF. Positions 144–148 match the Selectivity filter part_2 motif; sequence GREGP. At 165 to 174 the chain is on the cytoplasmic side; sequence RVKDDDTRHS. 2 intramembrane regions (helical) span residues 175–187 and 191–199; these read LLAS…LAAA and PLAGIMFVV. Topologically, residues 200–212 are cytoplasmic; sequence EEMRPQFRYSLIS. Residues 213–230 form a helical membrane-spanning segment; that stretch reads IRAVIISAVMANIVFRAI. Over 231-250 the chain is Periplasmic; the sequence is NGQDAVITMPQYQPPELKAL. The helical transmembrane segment at 251–279 threads the bilayer; it reads WLFLLLGGLFGVFGVLFNKLVTVAQDAFV. Residues 280–285 lie on the Cytoplasmic side of the membrane; it reads ALHKND. Residues 286–307 form a helical membrane-spanning segment; it reads RKRYLITGTCLGGIFGLLLLYV. The Periplasmic portion of the chain corresponds to 308-327; the sequence is PELTGGGIHLIPDVTNGNYS. 2 consecutive transmembrane segments (helical) span residues 328 to 347 and 353 to 374; these read VSLL…ICFG and GIFA…ATAK. Positions 353–357 match the Selectivity filter part_3 motif; the sequence is GIFAP. 2 residues coordinate chloride: isoleucine 354 and phenylalanine 355. Residues 375–384 are Periplasmic-facing; that stretch reads ILLPDLPIEP. Residues 385 to 399 constitute an intramembrane region (helical); the sequence is GMFAIAGMGALFAAT. An intramembrane region (note=Loop between two helices) is located at residues 400 to 402; that stretch reads VRA. An intramembrane region (helical) is located at residues 403 to 414; the sequence is PITGILLVIEMT. The note=Loop between two helices intramembrane region spans 415–419; it reads NNYYL. A helical transmembrane segment spans residues 420–436; the sequence is ILPLIITSLGAVICAQI. Topologically, residues 437-467 are cytoplasmic; sequence CGGKPIYSQLLHRTIKNDKLRQQDLPEQQNS. Tyrosine 443 is a binding site for chloride.

This sequence belongs to the chloride channel (TC 2.A.49) family. ClcA subfamily. Homodimer.

The protein localises to the cell inner membrane. It carries out the reaction 2 chloride(in) + H(+)(out) = 2 chloride(out) + H(+)(in). Its function is as follows. Proton-coupled chloride transporter. Functions as antiport system and exchanges two chloride ions for 1 proton. Probably acts as an electrical shunt for an outwardly-directed proton pump that is linked to amino acid decarboxylation, as part of the extreme acid resistance (XAR) response. This chain is H(+)/Cl(-) exchange transporter ClcA, found in Vibrio vulnificus (strain CMCP6).